The sequence spans 363 residues: Peptide chain release factor 1 (363 aa).

At Gln237 the chain carries N5-methylglutamine. The segment covering 284–296 (EDEKRRSAEESTR) has biased composition (basic and acidic residues). Residues 284–305 (EDEKRRSAEESTRRSLVASGDR) are disordered.

This sequence belongs to the prokaryotic/mitochondrial release factor family. Methylated by PrmC. Methylation increases the termination efficiency of RF1.

The protein resides in the cytoplasm. Peptide chain release factor 1 directs the termination of translation in response to the peptide chain termination codons UAG and UAA. This Shewanella baltica (strain OS195) protein is Peptide chain release factor 1.